A 1441-amino-acid polypeptide reads, in one-letter code: uncharacterized protein (1441 aa).

Disordered stretches follow at residues 1–95 (MGFL…EVIS), 150–204 (NGGI…QQQF), 224–289 (KPHQ…GEGE), 401–477 (HSNG…QLHQ), 529–661 (RHES…QPQQ), 680–760 (LNKD…KSQT), 776–810 (RKSSDSLNSSNSNIPITNISPGRQSQQQQQQHIQQ), 849–899 (QQQF…TQQL), 980–1118 (RGGS…DNNN), 1161–1185 (KSLKNSFNNNNNENINNNNNENENN), 1209–1321 (NIES…YRSY), 1348–1402 (GHNS…HIFF), and 1421–1441 (LKFNQQNNSNNNDDLGGSILE). Positions 19–38 (NDNSFDGGSSSYNNNNNNNN) are enriched in low complexity. Residues 39-56 (QPITYTPTAIRSPNNKTM) show a composition bias toward polar residues. Low complexity-rich tracts occupy residues 57–91 (SQSQTSIPTLSSSPSLNYPSSPPNNNNNNNNGNGN), 153–187 (ISQPTTPISSPSQPFQSVQPNLIIPTTPTTTTTTP), 227–283 (QQQQ…SLQN), 416–445 (NNNNNNNNNNNNNNGNNSNNGNINNNGINN), 555–564 (GNTDGVNIDN), and 572–635 (NNNN…TNNT). Residues 636-645 (ATPSVINGDS) show a composition bias toward polar residues. 2 stretches are compositionally biased toward low complexity: residues 648-661 (QEQPQQSQQQQPQQ) and 680-700 (LNKDSNNVDNNNNNNNIDDNN). Positions 703-720 (SREEMENILKKSQQDSNK) are enriched in basic and acidic residues. Residues 729–751 (EDSNSGSPTFQDFQSSAAASNVS) show a composition bias toward polar residues. Composition is skewed to low complexity over residues 780–810 (DSLNSSNSNIPITNISPGRQSQQQQQQHIQQ) and 849–880 (QQQFQFQQNSVSSQSLQSLNGGNNNNNSNSGS). Gly residues predominate over residues 881 to 892 (INGGSNSGGGGV). The span at 981-994 (GGSTNRTTPPFLTP) shows a compositional bias: polar residues. Positions 995-1067 (NTSQTNLSSL…NKQTANNTTN (73 aa)) are enriched in low complexity. The segment covering 1068-1087 (DFSFDQNTDLRSSTNSLTIG) has biased composition (polar residues). A compositionally biased stretch (low complexity) spans 1088 to 1118 (SNSNFSSLKNSLNLENPENNNNPDKNVDNNN). Low complexity-rich tracts occupy residues 1225 to 1249 (DNNNSSSNNNNNNLKNSNSNNSLRN) and 1257 to 1291 (NISNNNNNNNNNNNNNNNNNNNNNNNNNNNNNNNE). The segment covering 1362–1373 (RHKDSIGDKEMD) has biased composition (basic and acidic residues).

This is an uncharacterized protein from Dictyostelium discoideum (Social amoeba).